We begin with the raw amino-acid sequence, 342 residues long: MAAEAEQQHQLLSTAVHDTMPGKYVRPESQRPRLDLVVSDARIPVVDLASPDRAAVVSAVGDACRTHGFFQVVNHGIDAALIASVMEVGREFFRLPAEEKAKLYSDDPAKKIRLSTSFNVRKETVHNWRDYLRLHCYPLHQFVPDWPSNPPSFKEIIGTYCTEVRELGFRLYEAISESLGLEGGYMRETLGEQEQHMAVNYYPQCPEPELTYGLPAHTDPNALTILLMDDQVAGLQVLNDGKWIAVNPQPGALVINIGDQLQALSNGKYRSVWHRAVVNSDRERMSVASFLCPCNSVELGPAKKLITDDSPAVYRNYTYDEYYKKFWSRNLDQEHCLELFRT.

The region spanning glutamine 193–proline 293 is the Fe2OG dioxygenase domain. Fe cation is bound by residues histidine 217, aspartate 219, and histidine 274. Arginine 284 is a 2-oxoglutarate binding site.

This sequence belongs to the iron/ascorbate-dependent oxidoreductase family. It depends on Fe(2+) as a cofactor. L-ascorbate serves as cofactor. Expressed in roots, leaves and stems. Expressed at low levels in seeds.

The enzyme catalyses a (2S)-flavan-4-one + 2-oxoglutarate + O2 = a (2R,3R)-dihydroflavonol + succinate + CO2. The protein operates within secondary metabolite biosynthesis; flavonoid biosynthesis. Catalyzes the 3-beta-hydroxylation of 2S-flavanones to 2R,3R-dihydroflavonols which are intermediates in the biosynthesis of flavonols, anthocyanidins, catechins and proanthocyanidins in plants. Converts (2S)-eriodictyol to (+)-taxifolin and (2S)-naringenin to (+)-(2R/3R)-dihydrokaempferol in vitro. This is Flavanone 3-dioxygenase 2 from Oryza sativa subsp. japonica (Rice).